The chain runs to 465 residues: Purple acid phosphatase 2 (465 aa).

An N-terminal signal peptide occupies residues 1–32; the sequence is MGASRTGCYLLAVVLAAVMNAAIAGITSSFIR. 2 N-linked (GlcNAc...) asparagine glycosylation sites follow: Asn110 and Asn138. Asp164 contributes to the Fe cation binding site. N-linked (GlcNAc...) asparagine glycosylation is present at Asn172. 2 residues coordinate Fe cation: Asp193 and Tyr196. Residue Asp193 coordinates Mn(2+). Asn230 is a Mn(2+) binding site. Asn230 serves as a coordination point for substrate. Asn303 is a glycosylation site (N-linked (GlcNAc...) asparagine). Residue His315 coordinates Mn(2+). His325 (proton donor) is an active-site residue. His352 lines the Mn(2+) pocket. Position 352–354 (352–354) interacts with substrate; sequence HVH. His354 is a binding site for Fe cation. Asn400 and Asn425 each carry an N-linked (GlcNAc...) asparagine glycan.

The protein belongs to the metallophosphoesterase superfamily. Purple acid phosphatase family. In terms of assembly, homodimer; disulfide-linked. The cofactor is Fe cation. Mn(2+) serves as cofactor. Requires Zn(2+) as cofactor. It depends on Cu(2+) as a cofactor. Mg(2+) is required as a cofactor.

The protein resides in the secreted. The enzyme catalyses a phosphate monoester + H2O = an alcohol + phosphate. This Ipomoea batatas (Sweet potato) protein is Purple acid phosphatase 2 (PAP2).